Reading from the N-terminus, the 210-residue chain is Ras-related protein Rab-8 (210 aa).

15-22 (GDSGVGKT) serves as a coordination point for GTP. An Effector region motif is present at residues 37–45 (FISTIGIDF). Residues 63-67 (DTAGQ) and 121-124 (NKCD) each bind GTP. C207 is modified (cysteine methyl ester). The S-geranylgeranyl cysteine moiety is linked to residue C207. Residues 208–210 (SLL) constitute a propeptide, removed in mature form.

It belongs to the small GTPase superfamily. Rab family.

Its subcellular location is the cell membrane. This chain is Ras-related protein Rab-8, found in Diplobatis ommata (Ocellated electric ray).